The sequence spans 213 residues: Small ribosomal subunit protein uS5 (213 aa).

The region spanning 54–117 (LKSETVDVRL…RNAKLNIIPV (64 aa)) is the S5 DRBM domain.

This sequence belongs to the universal ribosomal protein uS5 family. Part of the 30S ribosomal subunit. Contacts protein S4.

Functionally, with S4 and S12 plays an important role in translational accuracy. The protein is Small ribosomal subunit protein uS5 of Hyperthermus butylicus (strain DSM 5456 / JCM 9403 / PLM1-5).